Reading from the N-terminus, the 102-residue chain is Small ribosomal subunit protein uS10 (102 aa).

Belongs to the universal ribosomal protein uS10 family. As to quaternary structure, part of the 30S ribosomal subunit.

Functionally, involved in the binding of tRNA to the ribosomes. The chain is Small ribosomal subunit protein uS10 from Mycoplasma mobile (strain ATCC 43663 / 163K / NCTC 11711) (Mesomycoplasma mobile).